The sequence spans 278 residues: Elongation factor Ts 1, mitochondrial (278 aa).

The protein belongs to the EF-Ts family.

Its subcellular location is the mitochondrion. Associates with the EF-Tu.GDP complex and induces the exchange of GDP to GTP. It remains bound to the aminoacyl-tRNA.EF-Tu.GTP complex up to the GTP hydrolysis stage on the ribosome. The polypeptide is Elongation factor Ts 1, mitochondrial (Trypanosoma cruzi (strain CL Brener)).